The following is a 270-amino-acid chain: Catechol 1,2-dioxygenase (270 aa).

Positions 152, 186, 210, and 212 each coordinate Fe cation.

Belongs to the intradiol ring-cleavage dioxygenase family. Requires Fe(3+) as cofactor.

The catalysed reaction is catechol + O2 = cis,cis-muconate + 2 H(+). The polypeptide is Catechol 1,2-dioxygenase (catA) (Rhodococcus opacus (Nocardia opaca)).